A 220-amino-acid chain; its full sequence is Guanylate kinase (220 aa).

A Guanylate kinase-like domain is found at 15-194; the sequence is GLMLVISSPS…AFEGIEAIVK (180 aa). An ATP-binding site is contributed by 22-29; the sequence is SPSGAGKS.

This sequence belongs to the guanylate kinase family.

The protein localises to the cytoplasm. It carries out the reaction GMP + ATP = GDP + ADP. In terms of biological role, essential for recycling GMP and indirectly, cGMP. The sequence is that of Guanylate kinase from Agrobacterium fabrum (strain C58 / ATCC 33970) (Agrobacterium tumefaciens (strain C58)).